Reading from the N-terminus, the 239-residue chain is 7-cyano-7-deazaguanine synthase (239 aa).

ATP is bound at residue 8–18; sequence FSGGLDSTACL. Zn(2+) is bound by residues Cys-194, Cys-209, Cys-212, and Cys-215.

Belongs to the QueC family. Requires Zn(2+) as cofactor.

The catalysed reaction is 7-carboxy-7-deazaguanine + NH4(+) + ATP = 7-cyano-7-deazaguanine + ADP + phosphate + H2O + H(+). Its pathway is purine metabolism; 7-cyano-7-deazaguanine biosynthesis. Its function is as follows. Catalyzes the ATP-dependent conversion of 7-carboxy-7-deazaguanine (CDG) to 7-cyano-7-deazaguanine (preQ(0)). In Pyrococcus horikoshii (strain ATCC 700860 / DSM 12428 / JCM 9974 / NBRC 100139 / OT-3), this protein is 7-cyano-7-deazaguanine synthase.